Here is a 240-residue protein sequence, read N- to C-terminus: Methylthioribulose-1-phosphate dehydratase (240 aa).

Cys99 is a binding site for substrate. The Zn(2+) site is built by His116 and His118. Glu145 acts as the Proton donor/acceptor in catalysis. Residue His201 coordinates Zn(2+).

It belongs to the aldolase class II family. MtnB subfamily. Zn(2+) serves as cofactor.

The protein localises to the cytoplasm. The catalysed reaction is 5-(methylsulfanyl)-D-ribulose 1-phosphate = 5-methylsulfanyl-2,3-dioxopentyl phosphate + H2O. It functions in the pathway amino-acid biosynthesis; L-methionine biosynthesis via salvage pathway; L-methionine from S-methyl-5-thio-alpha-D-ribose 1-phosphate: step 2/6. Functionally, catalyzes the dehydration of methylthioribulose-1-phosphate (MTRu-1-P) into 2,3-diketo-5-methylthiopentyl-1-phosphate (DK-MTP-1-P). This chain is Methylthioribulose-1-phosphate dehydratase, found in Paracoccidioides brasiliensis (strain Pb18).